We begin with the raw amino-acid sequence, 62 residues long: Large ribosomal subunit protein bL32 (62 aa).

Residues 1 to 16 are compositionally biased toward basic residues; sequence MAVQKNRKTRSKRGMR. Residues 1 to 62 form a disordered region; the sequence is MAVQKNRKTR…VISQGDSDDE (62 aa). A compositionally biased stretch (polar residues) spans 53-62; the sequence is VISQGDSDDE.

The protein belongs to the bacterial ribosomal protein bL32 family.

This chain is Large ribosomal subunit protein bL32, found in Alcanivorax borkumensis (strain ATCC 700651 / DSM 11573 / NCIMB 13689 / SK2).